A 332-amino-acid polypeptide reads, in one-letter code: tRNA-dihydrouridine synthase B (332 aa).

Residues 16–18 (PMA) and Gln-70 each bind FMN. Cys-100 (proton donor) is an active-site residue. FMN-binding positions include Lys-139, 200-202 (NGD), and 224-225 (GR).

It belongs to the Dus family. DusB subfamily. It depends on FMN as a cofactor.

The enzyme catalyses a 5,6-dihydrouridine in tRNA + NAD(+) = a uridine in tRNA + NADH + H(+). It carries out the reaction a 5,6-dihydrouridine in tRNA + NADP(+) = a uridine in tRNA + NADPH + H(+). Functionally, catalyzes the synthesis of 5,6-dihydrouridine (D), a modified base found in the D-loop of most tRNAs, via the reduction of the C5-C6 double bond in target uridines. The sequence is that of tRNA-dihydrouridine synthase B from Xanthomonas campestris pv. campestris (strain ATCC 33913 / DSM 3586 / NCPPB 528 / LMG 568 / P 25).